The following is a 1235-amino-acid chain: Phosphorylase b kinase regulatory subunit alpha, liver isoform (1235 aa).

The tract at residues 636 to 655 (FSPDSEPDLGGYLEDSSPQE) is disordered. Residues serine 695, serine 729, and serine 735 each carry the phosphoserine modification. A calmodulin-binding region spans residues 807-837 (LSELYGKAGLNQEWSLIRYISGLLRKKVEVL). Residues serine 983, serine 1015, and serine 1044 each carry the phosphoserine modification. The tract at residues 1033–1060 (SIKSVRSSTPSSPTGTSSTDSGGQHLGW) is disordered. The segment covering 1039–1055 (SSTPSSPTGTSSTDSGG) has biased composition (low complexity). The segment at 1059–1099 (GWGEQQGQWLRRRRLDGAINRVPVGFYQKVWKILQKCHGLS) is calmodulin-binding. A lipid anchor (S-farnesyl cysteine) is attached at cysteine 1232.

The protein belongs to the phosphorylase b kinase regulatory chain family. In terms of assembly, hexadecamer of 4 heterotetramers, each composed of alpha, beta, gamma, and delta subunits. Alpha (PHKA1 or PHKA2) and beta (PHKB) are regulatory subunits, gamma (PHKG1 or PHKG2) is the catalytic subunit, and delta is calmodulin. In terms of processing, although the final Cys may be farnesylated, the terminal tripeptide is probably not removed, and the C-terminus is not methylated.

The protein localises to the cell membrane. The protein operates within glycan biosynthesis; glycogen metabolism. By phosphorylation of various serine residues and by calcium. Its function is as follows. Phosphorylase b kinase catalyzes the phosphorylation of serine in certain substrates, including troponin I. The alpha chain may bind calmodulin. This Mus musculus (Mouse) protein is Phosphorylase b kinase regulatory subunit alpha, liver isoform (Phka2).